The chain runs to 398 residues: Succinate--CoA ligase [ADP-forming] subunit beta (398 aa).

The ATP-grasp domain maps to 9–254; that stretch reads KALLKSFGAP…KTEEDAKEIE (246 aa). Residues Lys46, 53–55, Glu109, Ala112, and Glu117 contribute to the ATP site; that span reads GRG. Mg(2+) contacts are provided by Asn209 and Asp223. Residues Asn274 and 331–333 contribute to the substrate site; that span reads GIM.

The protein belongs to the succinate/malate CoA ligase beta subunit family. As to quaternary structure, heterotetramer of two alpha and two beta subunits. The cofactor is Mg(2+).

It catalyses the reaction succinate + ATP + CoA = succinyl-CoA + ADP + phosphate. The enzyme catalyses GTP + succinate + CoA = succinyl-CoA + GDP + phosphate. It participates in carbohydrate metabolism; tricarboxylic acid cycle; succinate from succinyl-CoA (ligase route): step 1/1. In terms of biological role, succinyl-CoA synthetase functions in the citric acid cycle (TCA), coupling the hydrolysis of succinyl-CoA to the synthesis of either ATP or GTP and thus represents the only step of substrate-level phosphorylation in the TCA. The beta subunit provides nucleotide specificity of the enzyme and binds the substrate succinate, while the binding sites for coenzyme A and phosphate are found in the alpha subunit. In Allorhizobium ampelinum (strain ATCC BAA-846 / DSM 112012 / S4) (Agrobacterium vitis (strain S4)), this protein is Succinate--CoA ligase [ADP-forming] subunit beta.